The sequence spans 1569 residues: Pentafunctional AROM polypeptide (1569 aa).

The interval 1–382 (MAEAKKPGPE…HEPRASVVDD (382 aa)) is 3-dehydroquinate synthase. Residues 49 to 51 (DTN), 84 to 87 (EASK), 115 to 117 (GGV), and Asp-120 contribute to the NAD(+) site. Arg-131 contacts 7-phospho-2-dehydro-3-deoxy-D-arabino-heptonate. 140–141 (TT) provides a ligand contact to NAD(+). Residues Asp-147 and Lys-153 each contribute to the 7-phospho-2-dehydro-3-deoxy-D-arabino-heptonate site. Lys-162 contributes to the NAD(+) binding site. Residue Asn-163 participates in 7-phospho-2-dehydro-3-deoxy-D-arabino-heptonate binding. NAD(+) contacts are provided by residues 180–183 (FLET) and Asn-191. Glu-195 contributes to the Zn(2+) binding site. Residues 195 to 198 (EVVK) and Lys-248 each bind 7-phospho-2-dehydro-3-deoxy-D-arabino-heptonate. Glu-258 serves as the catalytic Proton acceptor; for 3-dehydroquinate synthase activity. 7-phospho-2-dehydro-3-deoxy-D-arabino-heptonate is bound by residues 262–266 (RNLLN) and His-269. Residue His-269 coordinates Zn(2+). His-273 serves as the catalytic Proton acceptor; for 3-dehydroquinate synthase activity. 2 residues coordinate 7-phospho-2-dehydro-3-deoxy-D-arabino-heptonate: His-285 and Lys-354. His-285 provides a ligand contact to Zn(2+). The interval 395 to 837 (VTPGVPSNLD…WDILSQAFKV (443 aa)) is EPSP synthase. Catalysis depends on Cys-819, which acts as the For EPSP synthase activity. Residues 859–1053 (ERSVFIIGMR…MEKDHSFFVS (195 aa)) form a shikimate kinase region. Residue 866–873 (GMRGAGKT) participates in ATP binding. The tract at residues 1054–1267 (LTVPDVSEAA…AAPGQMSAAE (214 aa)) is 3-dehydroquinase. Residue His-1170 is the Proton acceptor; for 3-dehydroquinate dehydratase activity of the active site. The active-site Schiff-base intermediate with substrate; for 3-dehydroquinate dehydratase activity is the Lys-1198. The tract at residues 1280 to 1569 (PCNFYLFGKP…RDARSAVLGL (290 aa)) is shikimate dehydrogenase.

In the N-terminal section; belongs to the sugar phosphate cyclases superfamily. Dehydroquinate synthase family. This sequence in the 2nd section; belongs to the EPSP synthase family. The protein in the 3rd section; belongs to the shikimate kinase family. It in the 4th section; belongs to the type-I 3-dehydroquinase family. In the C-terminal section; belongs to the shikimate dehydrogenase family. In terms of assembly, homodimer. The cofactor is Zn(2+).

Its subcellular location is the cytoplasm. It catalyses the reaction 7-phospho-2-dehydro-3-deoxy-D-arabino-heptonate = 3-dehydroquinate + phosphate. The catalysed reaction is 3-dehydroquinate = 3-dehydroshikimate + H2O. It carries out the reaction shikimate + NADP(+) = 3-dehydroshikimate + NADPH + H(+). The enzyme catalyses shikimate + ATP = 3-phosphoshikimate + ADP + H(+). It catalyses the reaction 3-phosphoshikimate + phosphoenolpyruvate = 5-O-(1-carboxyvinyl)-3-phosphoshikimate + phosphate. It participates in metabolic intermediate biosynthesis; chorismate biosynthesis; chorismate from D-erythrose 4-phosphate and phosphoenolpyruvate: step 2/7. Its pathway is metabolic intermediate biosynthesis; chorismate biosynthesis; chorismate from D-erythrose 4-phosphate and phosphoenolpyruvate: step 3/7. It functions in the pathway metabolic intermediate biosynthesis; chorismate biosynthesis; chorismate from D-erythrose 4-phosphate and phosphoenolpyruvate: step 4/7. The protein operates within metabolic intermediate biosynthesis; chorismate biosynthesis; chorismate from D-erythrose 4-phosphate and phosphoenolpyruvate: step 5/7. It participates in metabolic intermediate biosynthesis; chorismate biosynthesis; chorismate from D-erythrose 4-phosphate and phosphoenolpyruvate: step 6/7. Its function is as follows. The AROM polypeptide catalyzes 5 consecutive enzymatic reactions in prechorismate polyaromatic amino acid biosynthesis. This Fusarium vanettenii (strain ATCC MYA-4622 / CBS 123669 / FGSC 9596 / NRRL 45880 / 77-13-4) (Fusarium solani subsp. pisi) protein is Pentafunctional AROM polypeptide.